The sequence spans 156 residues: Cell division protein SepF (156 aa).

Positions S23–D36 are enriched in basic and acidic residues. A disordered region spans residues S23 to P50.

This sequence belongs to the SepF family. In terms of assembly, homodimer. Interacts with FtsZ.

Its subcellular location is the cytoplasm. Cell division protein that is part of the divisome complex and is recruited early to the Z-ring. Probably stimulates Z-ring formation, perhaps through the cross-linking of FtsZ protofilaments. Its function overlaps with FtsA. This is Cell division protein SepF from Bacillus thuringiensis (strain Al Hakam).